A 413-amino-acid polypeptide reads, in one-letter code: Phosphoglycerate kinase (413 aa).

Substrate-binding positions include 19–21 (DLN), Arg34, 57–60 (HQSK), Arg114, and Arg154. ATP contacts are provided by residues Glu332 and 358–361 (GGHS).

It belongs to the phosphoglycerate kinase family. In terms of assembly, monomer.

It is found in the cytoplasm. The catalysed reaction is (2R)-3-phosphoglycerate + ATP = (2R)-3-phospho-glyceroyl phosphate + ADP. The protein operates within carbohydrate degradation; glycolysis; pyruvate from D-glyceraldehyde 3-phosphate: step 2/5. This is Phosphoglycerate kinase from Thermococcus sibiricus (strain DSM 12597 / MM 739).